A 123-amino-acid polypeptide reads, in one-letter code: UPF0102 protein Dole_2298 (123 aa).

The protein belongs to the UPF0102 family.

The protein is UPF0102 protein Dole_2298 of Desulfosudis oleivorans (strain DSM 6200 / JCM 39069 / Hxd3) (Desulfococcus oleovorans).